The following is an 819-amino-acid chain: Zinc finger protein 27 (819 aa).

In terms of domain architecture, KRAB spans 1–75; sequence MDVTIDFSRE…KTLGAESCHD (75 aa). The interval 93 to 123 is disordered; sequence PKRPRHWDPPEDEPKHSSDLQTHDESNGLKR. Residues 98–120 show a composition bias toward basic and acidic residues; it reads HWDPPEDEPKHSSDLQTHDESNG. 21 C2H2-type zinc fingers span residues 205-227, 233-255, 261-283, 289-311, 317-339, 345-367, 401-423, 429-451, 457-479, 485-507, 513-535, 541-563, 569-591, 597-619, 625-647, 653-675, 681-703, 709-731, 737-759, 765-787, and 793-815; these read YVCV…QKTH, YKCG…RRIH, YDCS…QKIH, HGCV…QKIH, YVCI…RRIH, YACD…QRIH, SICA…QRTH, YQCG…RRIH, YVCV…QVIH, YQCG…KRIH, YVCS…QKTH, YVCA…QRIH, YGCS…EKIH, YGCR…QKIH, HVCA…QRIH, YGCT…RPIH, YVCA…QKTH, YACS…HRIH, YDCG…QRIH, YRCA…QTTH, and YKCV…ENVH.

Belongs to the krueppel C2H2-type zinc-finger protein family.

It is found in the nucleus. Functionally, may be involved in transcriptional regulation. The protein is Zinc finger protein 27 (Zfp27) of Mus musculus (Mouse).